The following is a 197-amino-acid chain: 3-isopropylmalate dehydratase small subunit (197 aa).

This sequence belongs to the LeuD family. LeuD type 1 subfamily. Heterodimer of LeuC and LeuD.

The enzyme catalyses (2R,3S)-3-isopropylmalate = (2S)-2-isopropylmalate. It functions in the pathway amino-acid biosynthesis; L-leucine biosynthesis; L-leucine from 3-methyl-2-oxobutanoate: step 2/4. Its function is as follows. Catalyzes the isomerization between 2-isopropylmalate and 3-isopropylmalate, via the formation of 2-isopropylmaleate. The sequence is that of 3-isopropylmalate dehydratase small subunit (leuD) from Streptomyces coelicolor (strain ATCC BAA-471 / A3(2) / M145).